The following is a 156-amino-acid chain: MPRRRVIGQRKILPDPKFKSELLAKFVNIVMVDGKKSTAEKIVYGALELMAEKSGKDHLAVFEEALENIRPSVEVKSRRVGGSTYQVPVEVRPVRRNALAMRWLVEAARKRGEKSMAQRLANEMLDASENKGTSVKKREDVHRMADANKAFAHYRW.

The protein belongs to the universal ribosomal protein uS7 family. In terms of assembly, part of the 30S ribosomal subunit. Contacts proteins S9 and S11.

In terms of biological role, one of the primary rRNA binding proteins, it binds directly to 16S rRNA where it nucleates assembly of the head domain of the 30S subunit. Is located at the subunit interface close to the decoding center, probably blocks exit of the E-site tRNA. The chain is Small ribosomal subunit protein uS7 from Aliivibrio salmonicida (strain LFI1238) (Vibrio salmonicida (strain LFI1238)).